Reading from the N-terminus, the 559-residue chain is Prolyl 4-hydroxylase subunit alpha-1 (559 aa).

The signal sequence occupies residues 1-16; sequence MRLALLVLATIGYAVA. Asn-158 carries an N-linked (GlcNAc...) asparagine glycan. Residues 404 to 512 enclose the Fe2OG dioxygenase domain; it reads TAEELQIANY…KWVSNKWIHE (109 aa). 3 residues coordinate Fe cation: His-422, Asp-424, and His-493. Residue Lys-503 participates in 2-oxoglutarate binding.

This sequence belongs to the P4HA family. Heterotetramer of two alpha chains and two beta chains. Exists either as a phy-1(2)/pdi-2(2) tetramer or as a phy-1/phy-2/pdi-2(2) tetramer. The cofactor is Fe(2+). Requires L-ascorbate as cofactor.

It is found in the endoplasmic reticulum lumen. The enzyme catalyses L-prolyl-[collagen] + 2-oxoglutarate + O2 = trans-4-hydroxy-L-prolyl-[collagen] + succinate + CO2. Its function is as follows. Catalyzes the post-translational formation of 4-hydroxyproline in -Xaa-Pro-Gly- sequences in collagens and other proteins. The polypeptide is Prolyl 4-hydroxylase subunit alpha-1 (dpy-18) (Caenorhabditis elegans).